The sequence spans 274 residues: Eukaryotic translation initiation factor 3 subunit G (274 aa).

In terms of domain architecture, RRM spans 192–270; sequence TAIRISNLSN…LILNVEWSKP (79 aa).

This sequence belongs to the eIF-3 subunit G family. As to quaternary structure, component of the eukaryotic translation initiation factor 3 (eIF-3) complex.

It is found in the cytoplasm. Functionally, RNA-binding component of the eukaryotic translation initiation factor 3 (eIF-3) complex, which is involved in protein synthesis of a specialized repertoire of mRNAs and, together with other initiation factors, stimulates binding of mRNA and methionyl-tRNAi to the 40S ribosome. The eIF-3 complex specifically targets and initiates translation of a subset of mRNAs involved in cell proliferation. This subunit can bind 18S rRNA. The chain is Eukaryotic translation initiation factor 3 subunit G from Bombyx mori (Silk moth).